Here is an 85-residue protein sequence, read N- to C-terminus: Acyl carrier protein ScoB (85 aa).

One can recognise a Carrier domain in the interval 1-77 (MPAPLTLDGF…QWWQLLSARQ (77 aa)). O-(pantetheine 4'-phosphoryl)serine is present on Ser38.

The protein belongs to the acyl carrier protein (ACP) family. Pantetheine 4'-phosphate is required as a cofactor.

Its pathway is lipid metabolism; fatty acid metabolism. In terms of biological role, acyl-carrier protein (ACP) involved in the biosynthesis of a unique class of isonitrile lipopeptides (INLPs). Is the dedicated ACP for the loading of activated acyl groups catalyzed by ScoC. The protein is Acyl carrier protein ScoB of Streptomyces coeruleorubidus.